A 175-amino-acid chain; its full sequence is Ribulose bisphosphate carboxylase small subunit, chloroplastic (175 aa).

The transit peptide at 1–34 (MSFATTNKTIVPCATTKQIVRPRFLSNGTISKSR) directs the protein to the chloroplast.

Belongs to the RuBisCO small chain family. As to quaternary structure, heterohexadecamer of 8 large and 8 small subunits.

It is found in the plastid. Its subcellular location is the chloroplast. RuBisCO catalyzes two reactions: the carboxylation of D-ribulose 1,5-bisphosphate, the primary event in carbon dioxide fixation, as well as the oxidative fragmentation of the pentose substrate. Both reactions occur simultaneously and in competition at the same active site. Although the small subunit is not catalytic it is essential for maximal activity. The sequence is that of Ribulose bisphosphate carboxylase small subunit, chloroplastic from Batophora oerstedii (Green alga).